The sequence spans 174 residues: Ribosomal RNA large subunit methyltransferase H (174 aa).

S-adenosyl-L-methionine-binding positions include Leu-90, Gly-122, and 141 to 146; that span reads LGELTW.

It belongs to the RNA methyltransferase RlmH family. In terms of assembly, homodimer.

It is found in the cytoplasm. The enzyme catalyses pseudouridine(1915) in 23S rRNA + S-adenosyl-L-methionine = N(3)-methylpseudouridine(1915) in 23S rRNA + S-adenosyl-L-homocysteine + H(+). In terms of biological role, specifically methylates the pseudouridine at position 1915 (m3Psi1915) in 23S rRNA. In Brucella melitensis biotype 2 (strain ATCC 23457), this protein is Ribosomal RNA large subunit methyltransferase H.